Here is a 501-residue protein sequence, read N- to C-terminus: Probable cytosol aminopeptidase (501 aa).

Residues Lys268 and Asp273 each contribute to the Mn(2+) site. Lys280 is an active-site residue. Residues Asp291, Asp350, and Glu352 each coordinate Mn(2+). Arg354 is a catalytic residue.

This sequence belongs to the peptidase M17 family. Mn(2+) serves as cofactor.

The protein localises to the cytoplasm. The catalysed reaction is Release of an N-terminal amino acid, Xaa-|-Yaa-, in which Xaa is preferably Leu, but may be other amino acids including Pro although not Arg or Lys, and Yaa may be Pro. Amino acid amides and methyl esters are also readily hydrolyzed, but rates on arylamides are exceedingly low.. It carries out the reaction Release of an N-terminal amino acid, preferentially leucine, but not glutamic or aspartic acids.. In terms of biological role, presumably involved in the processing and regular turnover of intracellular proteins. Catalyzes the removal of unsubstituted N-terminal amino acids from various peptides. This chain is Probable cytosol aminopeptidase, found in Pseudoalteromonas atlantica (strain T6c / ATCC BAA-1087).